Here is a 362-residue protein sequence, read N- to C-terminus: Aspartate carbamoyltransferase catalytic subunit (362 aa).

The disordered stretch occupies residues 1 to 22 (MPKTAMTDSTSKTSTNTASSDM). Residues 7 to 20 (TDSTSKTSTNTASS) show a composition bias toward low complexity. The carbamoyl phosphate site is built by arginine 100 and threonine 101. L-aspartate is bound at residue lysine 128. Carbamoyl phosphate-binding residues include arginine 150, histidine 180, and glutamine 183. L-aspartate-binding residues include arginine 214 and arginine 269. Carbamoyl phosphate contacts are provided by glycine 310 and proline 311.

Belongs to the aspartate/ornithine carbamoyltransferase superfamily. ATCase family. As to quaternary structure, heterododecamer (2C3:3R2) of six catalytic PyrB chains organized as two trimers (C3), and six regulatory PyrI chains organized as three dimers (R2).

The catalysed reaction is carbamoyl phosphate + L-aspartate = N-carbamoyl-L-aspartate + phosphate + H(+). Its pathway is pyrimidine metabolism; UMP biosynthesis via de novo pathway; (S)-dihydroorotate from bicarbonate: step 2/3. Functionally, catalyzes the condensation of carbamoyl phosphate and aspartate to form carbamoyl aspartate and inorganic phosphate, the committed step in the de novo pyrimidine nucleotide biosynthesis pathway. The sequence is that of Aspartate carbamoyltransferase catalytic subunit from Psychrobacter sp. (strain PRwf-1).